Consider the following 210-residue polypeptide: Prolactin-2 (210 aa).

Residues 1-23 (MARRSQGTKLHLAVLCLVVSCHA) form the signal peptide. 2 disulfide bridges follow: Cys-69/Cys-183 and Cys-200/Cys-210.

It belongs to the somatotropin/prolactin family.

The protein localises to the secreted. The sequence is that of Prolactin-2 (prl2) from Oncorhynchus keta (Chum salmon).